Reading from the N-terminus, the 264-residue chain is Hydroxyethylthiazole kinase (264 aa).

Residue Met-43 coordinates substrate. Residues Lys-119 and Ser-165 each contribute to the ATP site. Substrate is bound at residue Gly-192.

This sequence belongs to the Thz kinase family. Mg(2+) is required as a cofactor.

It carries out the reaction 5-(2-hydroxyethyl)-4-methylthiazole + ATP = 4-methyl-5-(2-phosphooxyethyl)-thiazole + ADP + H(+). Its pathway is cofactor biosynthesis; thiamine diphosphate biosynthesis; 4-methyl-5-(2-phosphoethyl)-thiazole from 5-(2-hydroxyethyl)-4-methylthiazole: step 1/1. Catalyzes the phosphorylation of the hydroxyl group of 4-methyl-5-beta-hydroxyethylthiazole (THZ). This Methanocorpusculum labreanum (strain ATCC 43576 / DSM 4855 / Z) protein is Hydroxyethylthiazole kinase.